A 678-amino-acid polypeptide reads, in one-letter code: Amino-acid acetyltransferase, mitochondrial (678 aa).

The disordered stretch occupies residues 86–111 (LKAQHPPKAQTEPTTGHSKGTVTQSL). Over residues 96 to 111 (TEPTTGHSKGTVTQSL) the composition is skewed to polar residues. The region spanning 499–668 (NRPRLSLDDP…YEQVCRSIQP (170 aa)) is the N-acetyltransferase domain.

The protein belongs to the acetyltransferase family.

It localises to the mitochondrion. The enzyme catalyses L-glutamate + acetyl-CoA = N-acetyl-L-glutamate + CoA + H(+). The protein operates within amino-acid biosynthesis; L-arginine biosynthesis; N(2)-acetyl-L-ornithine from L-glutamate: step 1/4. Its function is as follows. N-acetylglutamate synthase involved in arginine biosynthesis. The sequence is that of Amino-acid acetyltransferase, mitochondrial (arg2) from Aspergillus oryzae (strain ATCC 42149 / RIB 40) (Yellow koji mold).